The chain runs to 200 residues: 7-methyl-GTP pyrophosphatase (200 aa).

Asp69 (proton acceptor) is an active-site residue.

Belongs to the Maf family. YceF subfamily. It depends on a divalent metal cation as a cofactor.

It localises to the cytoplasm. It catalyses the reaction N(7)-methyl-GTP + H2O = N(7)-methyl-GMP + diphosphate + H(+). Functionally, nucleoside triphosphate pyrophosphatase that hydrolyzes 7-methyl-GTP (m(7)GTP). May have a dual role in cell division arrest and in preventing the incorporation of modified nucleotides into cellular nucleic acids. The sequence is that of 7-methyl-GTP pyrophosphatase from Colwellia psychrerythraea (strain 34H / ATCC BAA-681) (Vibrio psychroerythus).